The following is a 253-amino-acid chain: MRNIRLRVEYDGTPYAGWQRQPGGIVTVQGELEACLSRILQERVNLAAAGRTDRGVHALGQVVNFQTASSLELQRIAHSLNCLLPDTIRVDCPQEVDMEFHARFSAAERQYRYFLMEEPSAVFGRFAGCSSRPLDLPLMHSLAVTLKGIHDFSAFSREDRDGTGSLCSVRMAGWYRHRGFLVFHIAANRFLRSMVRGLVGAMMDIGAGRLDPCSFKAMLDADAHARRVRPAAASGLFLSRVVYPDDYGCRKLR.

Residue Asp-53 is the Nucleophile of the active site. Tyr-111 is a binding site for substrate.

Belongs to the tRNA pseudouridine synthase TruA family. In terms of assembly, homodimer.

The enzyme catalyses uridine(38/39/40) in tRNA = pseudouridine(38/39/40) in tRNA. Formation of pseudouridine at positions 38, 39 and 40 in the anticodon stem and loop of transfer RNAs. This is tRNA pseudouridine synthase A from Chlorobium luteolum (strain DSM 273 / BCRC 81028 / 2530) (Pelodictyon luteolum).